An 82-amino-acid chain; its full sequence is UPF0512 protein P (82 aa).

The protein belongs to the UPF0512 family.

The chain is UPF0512 protein P from Dictyostelium discoideum (Social amoeba).